Here is a 311-residue protein sequence, read N- to C-terminus: Acetyl-coenzyme A carboxylase carboxyl transferase subunit beta (311 aa).

The region spanning 32–299 is the CoA carboxyltransferase N-terminal domain; that stretch reads LWVKCPVSEE…TSMPAALTPP (268 aa). The interval 291-311 is disordered; that stretch reads SMPAALTPPAPDHVVADGGSH.

This sequence belongs to the AccD/PCCB family. As to quaternary structure, acetyl-CoA carboxylase is a heterohexamer composed of biotin carboxyl carrier protein (AccB), biotin carboxylase (AccC) and two subunits each of ACCase subunit alpha (AccA) and ACCase subunit beta (AccD).

It is found in the cytoplasm. It carries out the reaction N(6)-carboxybiotinyl-L-lysyl-[protein] + acetyl-CoA = N(6)-biotinyl-L-lysyl-[protein] + malonyl-CoA. It participates in lipid metabolism; malonyl-CoA biosynthesis; malonyl-CoA from acetyl-CoA: step 1/1. Component of the acetyl coenzyme A carboxylase (ACC) complex. Biotin carboxylase (BC) catalyzes the carboxylation of biotin on its carrier protein (BCCP) and then the CO(2) group is transferred by the transcarboxylase to acetyl-CoA to form malonyl-CoA. The polypeptide is Acetyl-coenzyme A carboxylase carboxyl transferase subunit beta (Maricaulis maris (strain MCS10) (Caulobacter maris)).